A 501-amino-acid polypeptide reads, in one-letter code: Glutamyl-tRNA(Gln) amidotransferase subunit A (501 aa).

Catalysis depends on charge relay system residues K80 and S155. The active-site Acyl-ester intermediate is S179.

The protein belongs to the amidase family. GatA subfamily. As to quaternary structure, heterotrimer of A, B and C subunits.

It catalyses the reaction L-glutamyl-tRNA(Gln) + L-glutamine + ATP + H2O = L-glutaminyl-tRNA(Gln) + L-glutamate + ADP + phosphate + H(+). Functionally, allows the formation of correctly charged Gln-tRNA(Gln) through the transamidation of misacylated Glu-tRNA(Gln) in organisms which lack glutaminyl-tRNA synthetase. The reaction takes place in the presence of glutamine and ATP through an activated gamma-phospho-Glu-tRNA(Gln). This is Glutamyl-tRNA(Gln) amidotransferase subunit A from Cupriavidus necator (strain ATCC 17699 / DSM 428 / KCTC 22496 / NCIMB 10442 / H16 / Stanier 337) (Ralstonia eutropha).